The sequence spans 81 residues: Small ribosomal subunit protein bS18 (81 aa).

Belongs to the bacterial ribosomal protein bS18 family. Part of the 30S ribosomal subunit. Forms a tight heterodimer with protein bS6.

Binds as a heterodimer with protein bS6 to the central domain of the 16S rRNA, where it helps stabilize the platform of the 30S subunit. This chain is Small ribosomal subunit protein bS18, found in Syntrophobacter fumaroxidans (strain DSM 10017 / MPOB).